The sequence spans 254 residues: Probable phosphatase TTE1963 (254 aa).

His14, His16, His22, His47, Glu80, His108, His139, Asp200, and His202 together coordinate Zn(2+).

It belongs to the PHP family. Zn(2+) serves as cofactor.

The polypeptide is Probable phosphatase TTE1963 (Caldanaerobacter subterraneus subsp. tengcongensis (strain DSM 15242 / JCM 11007 / NBRC 100824 / MB4) (Thermoanaerobacter tengcongensis)).